Here is a 359-residue protein sequence, read N- to C-terminus: 3-dehydroquinate synthase (359 aa).

NAD(+)-binding positions include 71 to 76 (DGEAYK), 105 to 109 (GVIGD), 129 to 130 (TT), lysine 142, and lysine 151. Positions 184, 247, and 264 each coordinate Zn(2+).

Belongs to the sugar phosphate cyclases superfamily. Dehydroquinate synthase family. Requires Co(2+) as cofactor. It depends on Zn(2+) as a cofactor. NAD(+) serves as cofactor.

Its subcellular location is the cytoplasm. It catalyses the reaction 7-phospho-2-dehydro-3-deoxy-D-arabino-heptonate = 3-dehydroquinate + phosphate. Its pathway is metabolic intermediate biosynthesis; chorismate biosynthesis; chorismate from D-erythrose 4-phosphate and phosphoenolpyruvate: step 2/7. In terms of biological role, catalyzes the conversion of 3-deoxy-D-arabino-heptulosonate 7-phosphate (DAHP) to dehydroquinate (DHQ). The chain is 3-dehydroquinate synthase from Burkholderia vietnamiensis (strain G4 / LMG 22486) (Burkholderia cepacia (strain R1808)).